A 258-amino-acid polypeptide reads, in one-letter code: Acyl-[acyl-carrier-protein]--UDP-N-acetylglucosamine O-acyltransferase (258 aa).

It belongs to the transferase hexapeptide repeat family. LpxA subfamily. As to quaternary structure, homotrimer.

It is found in the cytoplasm. The catalysed reaction is a (3R)-hydroxyacyl-[ACP] + UDP-N-acetyl-alpha-D-glucosamine = a UDP-3-O-[(3R)-3-hydroxyacyl]-N-acetyl-alpha-D-glucosamine + holo-[ACP]. It participates in glycolipid biosynthesis; lipid IV(A) biosynthesis; lipid IV(A) from (3R)-3-hydroxytetradecanoyl-[acyl-carrier-protein] and UDP-N-acetyl-alpha-D-glucosamine: step 1/6. Functionally, involved in the biosynthesis of lipid A, a phosphorylated glycolipid that anchors the lipopolysaccharide to the outer membrane of the cell. In Saccharophagus degradans (strain 2-40 / ATCC 43961 / DSM 17024), this protein is Acyl-[acyl-carrier-protein]--UDP-N-acetylglucosamine O-acyltransferase.